Here is a 278-residue protein sequence, read N- to C-terminus: Rhomboid protease GlpG (278 aa).

6 helical membrane-spanning segments follow: residues 94 to 114 (AGPL…LMLI), 143 to 163 (AFLH…WYLG), 175 to 195 (LLVL…LFSG), 196 to 216 (ANFG…WLTG), 224 to 241 (ISLP…LIAG), and 245 to 267 (ILGL…LMAF). S202 functions as the Nucleophile in the catalytic mechanism. H255 is a catalytic residue.

Belongs to the peptidase S54 family.

It localises to the cell inner membrane. The catalysed reaction is Cleaves type-1 transmembrane domains using a catalytic dyad composed of serine and histidine that are contributed by different transmembrane domains.. Functionally, rhomboid-type serine protease that catalyzes intramembrane proteolysis. This chain is Rhomboid protease GlpG, found in Yersinia pestis bv. Antiqua (strain Antiqua).